We begin with the raw amino-acid sequence, 397 residues long: S-adenosylmethionine synthase (397 aa).

Histidine 15 is a binding site for ATP. Residue aspartate 17 participates in Mg(2+) binding. Glutamate 43 contributes to the K(+) binding site. L-methionine-binding residues include glutamate 56 and glutamine 99. A flexible loop region spans residues 99–109; that stretch reads QSGDIAMGVDE. ATP contacts are provided by residues 175-177, 241-242, aspartate 250, 256-257, alanine 273, and lysine 277; these read DGK, RF, and RK. Residue aspartate 250 coordinates L-methionine. Lysine 281 provides a ligand contact to L-methionine.

Belongs to the AdoMet synthase family. As to quaternary structure, homotetramer; dimer of dimers. Mg(2+) serves as cofactor. Requires K(+) as cofactor.

The protein resides in the cytoplasm. The enzyme catalyses L-methionine + ATP + H2O = S-adenosyl-L-methionine + phosphate + diphosphate. The protein operates within amino-acid biosynthesis; S-adenosyl-L-methionine biosynthesis; S-adenosyl-L-methionine from L-methionine: step 1/1. Functionally, catalyzes the formation of S-adenosylmethionine (AdoMet) from methionine and ATP. The overall synthetic reaction is composed of two sequential steps, AdoMet formation and the subsequent tripolyphosphate hydrolysis which occurs prior to release of AdoMet from the enzyme. This chain is S-adenosylmethionine synthase, found in Clostridioides difficile (strain 630) (Peptoclostridium difficile).